The following is a 112-amino-acid chain: ATP synthase subunit c (112 aa).

2 consecutive transmembrane segments (helical) span residues 36–56 (FSVL…AIGM) and 81–101 (MFIA…IALI).

The protein belongs to the ATPase C chain family. F-type ATPases have 2 components, F(1) - the catalytic core - and F(0) - the membrane proton channel. F(1) has five subunits: alpha(3), beta(3), gamma(1), delta(1), epsilon(1). F(0) has three main subunits: a(1), b(2) and c(10-14). The alpha and beta chains form an alternating ring which encloses part of the gamma chain. F(1) is attached to F(0) by a central stalk formed by the gamma and epsilon chains, while a peripheral stalk is formed by the delta and b chains.

Its subcellular location is the cell inner membrane. Its function is as follows. F(1)F(0) ATP synthase produces ATP from ADP in the presence of a proton or sodium gradient. F-type ATPases consist of two structural domains, F(1) containing the extramembraneous catalytic core and F(0) containing the membrane proton channel, linked together by a central stalk and a peripheral stalk. During catalysis, ATP synthesis in the catalytic domain of F(1) is coupled via a rotary mechanism of the central stalk subunits to proton translocation. Functionally, key component of the F(0) channel; it plays a direct role in translocation across the membrane. A homomeric c-ring of between 10-14 subunits forms the central stalk rotor element with the F(1) delta and epsilon subunits. This chain is ATP synthase subunit c, found in Campylobacter jejuni subsp. doylei (strain ATCC BAA-1458 / RM4099 / 269.97).